The primary structure comprises 73 residues: Putative antimicrobial peptide clone 4 (73 aa).

A signal peptide spans methionine 1–alanine 22. Residues aspartate 45–tyrosine 73 constitute a propeptide that is removed on maturation.

It belongs to the non-disulfide-bridged peptide (NDBP) superfamily. Short antimicrobial peptide (group 4) family. As to expression, expressed by the venom gland.

It is found in the secreted. Antimicrobial peptide. Has a high antibacterial activity against the Gram-positive bacterium S.aureus (MIC=5-17.30 uM), the methicillin-resistant S.aureus (MRSA) (MIC=17.30 uM), and E.faecalis (MIC=69.23 uM). Has antifungal activity against Candida spp. and one Cryptococcus neoformans strains with MICs values ranging from 6.25 to 100 uM. Also shows an inhibitory activity on C.albicans biofilms at high concentrations. Has a moderate hemolytic potency (18% at 20 uM). Also inhibits the growth of the five cancer cell lines tested. In the model of polymicrobial sepsis, it exhibits an antibiotic effect, reducing the levels of microorganisms in the infectious focus and the inflammatory responses in the lung and cecum of septic animals. The protein is Putative antimicrobial peptide clone 4 of Tityus costatus (Brazilian scorpion).